A 1139-amino-acid chain; its full sequence is Integrin alpha ina-1 (1139 aa).

A signal peptide spans 1 to 19; the sequence is MRECIISWTLLLCLSCVKS. The Extracellular segment spans residues 20–1084; sequence FNLDVNAPIY…PTIGDSRPIP (1065 aa). An FG-GAP 1 repeat occupies 21–85; sequence NLDVNAPIYR…CDINTFYNGG (65 aa). Asn108 and Asn136 each carry an N-linked (GlcNAc...) asparagine glycan. 6 FG-GAP repeats span residues 111–171, 180–231, 242–302, 307–370, 378–438, and 448–510; these read RGRT…LQST, LPTT…IFDS, NGDM…SSSK, EDKF…QRKQ, HPPK…IEKF, and GNDL…MEKR. N-linked (GlcNAc...) asparagine glycosylation is present at Asn313. N-linked (GlcNAc...) asparagine glycans are attached at residues Asn580, Asn788, Asn851, and Asn1026. A helical membrane pass occupies residues 1085-1106; the sequence is WWIYVIAAVIGVLILSLIIICL. At 1107-1139 the chain is on the cytoplasmic side; that stretch reads SKCGFFKRNRLDQPSLYTAQLKHEREEWADTGL.

This sequence belongs to the integrin alpha chain family. In terms of assembly, heterodimer of an alpha and a beta subunit. Alpha ina-1 associates with beta pat-3. Interacts (via cytoplasmic domain) with src-1 (when phosphorylated at 'Tyr-416').

It localises to the membrane. It is found in the cell projection. Its subcellular location is the phagocytic cup. The protein localises to the cytoplasmic vesicle. The protein resides in the phagosome membrane. In terms of biological role, plays a role in cell migration, axon fasciculation, and morphogenesis. During gonad morphogenesis, involved in distal tip cell (DTC)-mediated guidance of gonad elongation, in maintaining their sharp tapering morphology and in their migration. Involved in the anterior-posterior positioning of QR neuroblast descendants by regulating the migratory speed of QR.p. Probably by acting as a receptor for apoptotic cells, plays a role in the clearance of apoptotic cells during mid-embryogenesis. The sequence is that of Integrin alpha ina-1 (ina-1) from Caenorhabditis elegans.